The chain runs to 338 residues: Eukaryotic translation initiation factor 3 subunit H (338 aa).

Residues 22–154 enclose the MPN domain; sequence VQCDGLAVMK…LKAYRLTPQA (133 aa).

This sequence belongs to the eIF-3 subunit H family. As to quaternary structure, component of the eukaryotic translation initiation factor 3 (eIF-3) complex. The eIF-3 complex interacts with pix. Interacts with mxt.

It is found in the cytoplasm. Its function is as follows. Component of the eukaryotic translation initiation factor 3 (eIF-3) complex, which is involved in protein synthesis of a specialized repertoire of mRNAs and, together with other initiation factors, stimulates binding of mRNA and methionyl-tRNAi to the 40S ribosome. The eIF-3 complex specifically targets and initiates translation of a subset of mRNAs involved in cell proliferation. This Drosophila melanogaster (Fruit fly) protein is Eukaryotic translation initiation factor 3 subunit H.